We begin with the raw amino-acid sequence, 165 residues long: Large ribosomal subunit protein uL30 (165 aa).

It belongs to the universal ribosomal protein uL30 family. Part of the 50S ribosomal subunit.

This is Large ribosomal subunit protein uL30 from Thermoplasma volcanium (strain ATCC 51530 / DSM 4299 / JCM 9571 / NBRC 15438 / GSS1).